The sequence spans 209 residues: Glycerol-3-phosphate acyltransferase (209 aa).

Transmembrane regions (helical) follow at residues 5-25 (IIGM…LWIG), 50-70 (LGFK…TLAA), 74-94 (YFLG…ASLG), 115-135 (ILLA…IFVL), and 151-171 (AIFI…AGIL).

The protein belongs to the PlsY family. Probably interacts with PlsX.

The protein localises to the cell membrane. The enzyme catalyses an acyl phosphate + sn-glycerol 3-phosphate = a 1-acyl-sn-glycero-3-phosphate + phosphate. The protein operates within lipid metabolism; phospholipid metabolism. Its function is as follows. Catalyzes the transfer of an acyl group from acyl-phosphate (acyl-PO(4)) to glycerol-3-phosphate (G3P) to form lysophosphatidic acid (LPA). This enzyme utilizes acyl-phosphate as fatty acyl donor, but not acyl-CoA or acyl-ACP. This chain is Glycerol-3-phosphate acyltransferase, found in Limosilactobacillus reuteri (strain DSM 20016) (Lactobacillus reuteri).